We begin with the raw amino-acid sequence, 286 residues long: Protease HtpX homolog (286 aa).

2 helical membrane-spanning segments follow: residues 6–26 (TCFLMVVLMLLFVFVGGYVGG) and 28–48 (QGMIIAFLVALGMNFFSYFFS). Residue histidine 130 coordinates Zn(2+). Glutamate 131 is a catalytic residue. Residue histidine 134 coordinates Zn(2+). 2 consecutive transmembrane segments (helical) span residues 140–160 (ILTGSIAAVMAGAIAMLANFA) and 178–198 (AIMLIIALIMPLAATIIQMAI). Glutamate 203 serves as a coordination point for Zn(2+).

Belongs to the peptidase M48B family. It depends on Zn(2+) as a cofactor.

Its subcellular location is the cell inner membrane. This is Protease HtpX homolog from Campylobacter curvus (strain 525.92).